A 501-amino-acid chain; its full sequence is Acetylcholine receptor subunit beta (501 aa).

The N-terminal stretch at 1 to 23 (MALGALLLILGILGTPLAPGARG) is a signal peptide. Over 24-244 (SEAEGQLLKK…VIFYLIIRRK (221 aa)) the chain is Extracellular. Cys151 and Cys165 are oxidised to a cystine. The N-linked (GlcNAc...) asparagine glycan is linked to Asn164. 3 consecutive transmembrane segments (helical) span residues 245-269 (PLFYLVNVIAPCILITLLAIFVFYL), 277-295 (MGLSIFALLTLTVFLLLLA), and 311-332 (YLMFTMILVTFSVILSVVVLNL). Residues 333–469 (HHRSPHTHQM…WQFVAMVVDR (137 aa)) are Cytoplasmic-facing. The tract at residues 362–381 (RPKPERDQLPEPHHSFSPRS) is disordered. Residues 363–375 (PKPERDQLPEPHH) show a composition bias toward basic and acidic residues. Position 390 is a phosphotyrosine; by Tyr-kinases (Tyr390). The chain crosses the membrane as a helical span at residues 470 to 488 (LFLWTFIVFTSVGTLVIFL).

Belongs to the ligand-gated ion channel (TC 1.A.9) family. Acetylcholine receptor (TC 1.A.9.1) subfamily. Beta-1/CHRNB1 sub-subfamily. In terms of assembly, pentamer of two alpha chains, and one each of the beta, delta, and gamma (in immature muscle) or epsilon (in mature muscle) chains. The muscle heteropentamer composed of alpha-1, beta-1, delta, epsilon subunits interacts with the alpha-conotoxin ImII.

Its subcellular location is the postsynaptic cell membrane. The protein resides in the cell membrane. It catalyses the reaction K(+)(in) = K(+)(out). The catalysed reaction is Na(+)(in) = Na(+)(out). Its function is as follows. After binding acetylcholine, the AChR responds by an extensive change in conformation that affects all subunits and leads to opening of an ion-conducting channel across the plasma membrane. The polypeptide is Acetylcholine receptor subunit beta (Chrnb1) (Rattus norvegicus (Rat)).